The following is a 151-amino-acid chain: Methylglyoxal synthase (151 aa).

The MGS-like domain maps to 6 to 151; it reads RTMPAHKHVA…DYDAYLAERT (146 aa). Substrate is bound by residues His19, Lys23, 45 to 48, and 65 to 66; these read TGTT and SG. Catalysis depends on Asp71, which acts as the Proton donor/acceptor. Substrate is bound at residue His98.

The protein belongs to the methylglyoxal synthase family.

The enzyme catalyses dihydroxyacetone phosphate = methylglyoxal + phosphate. Functionally, catalyzes the formation of methylglyoxal from dihydroxyacetone phosphate. The polypeptide is Methylglyoxal synthase (Vibrio campbellii (strain ATCC BAA-1116)).